The chain runs to 823 residues: Putative E3 ubiquitin-protein ligase RF4 (823 aa).

Disordered stretches follow at residues 24-72 (TVSP…NGSV), 224-291 (SKLS…CSGS), and 432-464 (ESVT…SEEK). The segment covering 61–72 (KPQNHLSGNGSV) has biased composition (polar residues). Positions 224–240 (SKLSDSESLGAESNPPK) are enriched in low complexity. The segment covering 267–282 (FPNTPNSKKTQSSGTT) has biased composition (polar residues). Over residues 453–464 (SEKKSGSESEEK) the composition is skewed to basic and acidic residues. The stretch at 536–738 (ELKALRKERE…ELKLKSDYSR (203 aa)) forms a coiled coil. The segment at 768 to 808 (CVMCLSEEMSVIFLPCAHQVLCFKCNQLHEKEGMMDCPSCR) adopts an RING-type zinc-finger fold.

Belongs to the RING-type zinc finger family.

The enzyme catalyses S-ubiquitinyl-[E2 ubiquitin-conjugating enzyme]-L-cysteine + [acceptor protein]-L-lysine = [E2 ubiquitin-conjugating enzyme]-L-cysteine + N(6)-ubiquitinyl-[acceptor protein]-L-lysine.. It participates in protein modification; protein ubiquitination. This Arabidopsis thaliana (Mouse-ear cress) protein is Putative E3 ubiquitin-protein ligase RF4 (RF4).